The primary structure comprises 297 residues: Formamidopyrimidine-DNA glycosylase (297 aa).

Pro-2 (schiff-base intermediate with DNA) is an active-site residue. The active-site Proton donor is Glu-3. Lys-58 acts as the Proton donor; for beta-elimination activity in catalysis. 3 residues coordinate DNA: His-106, Arg-125, and Arg-168. The FPG-type zinc finger occupies 259–295; sequence RVYDREGLACTARGCRGRVRRIVQAGRSTFYCETCQP. Catalysis depends on Arg-285, which acts as the Proton donor; for delta-elimination activity.

Belongs to the FPG family. As to quaternary structure, monomer. Requires Zn(2+) as cofactor.

It carries out the reaction Hydrolysis of DNA containing ring-opened 7-methylguanine residues, releasing 2,6-diamino-4-hydroxy-5-(N-methyl)formamidopyrimidine.. The catalysed reaction is 2'-deoxyribonucleotide-(2'-deoxyribose 5'-phosphate)-2'-deoxyribonucleotide-DNA = a 3'-end 2'-deoxyribonucleotide-(2,3-dehydro-2,3-deoxyribose 5'-phosphate)-DNA + a 5'-end 5'-phospho-2'-deoxyribonucleoside-DNA + H(+). Functionally, involved in base excision repair of DNA damaged by oxidation or by mutagenic agents. Acts as a DNA glycosylase that recognizes and removes damaged bases. Has a preference for oxidized purines, such as 7,8-dihydro-8-oxoguanine (8-oxoG). Has AP (apurinic/apyrimidinic) lyase activity and introduces nicks in the DNA strand. Cleaves the DNA backbone by beta-delta elimination to generate a single-strand break at the site of the removed base with both 3'- and 5'-phosphates. This Methylobacterium sp. (strain 4-46) protein is Formamidopyrimidine-DNA glycosylase.